The sequence spans 140 residues: Putative pre-16S rRNA nuclease (140 aa).

The protein belongs to the YqgF nuclease family.

It localises to the cytoplasm. Could be a nuclease involved in processing of the 5'-end of pre-16S rRNA. This chain is Putative pre-16S rRNA nuclease, found in Yersinia pseudotuberculosis serotype O:1b (strain IP 31758).